The sequence spans 555 residues: Suppressor of tumorigenicity 7 protein-like (555 aa).

A run of 2 helical transmembrane segments spans residues 36-56 (GLAG…LYAL) and 80-100 (FYVA…IFEW). The disordered stretch occupies residues 126–148 (TESSISEPGSPSNNRESETSRQN).

It belongs to the ST7 family.

The protein localises to the membrane. The sequence is that of Suppressor of tumorigenicity 7 protein-like (ST7L) from Bos taurus (Bovine).